The sequence spans 271 residues: Proteasome inhibitor PI31 subunit (271 aa).

Ala2 carries the post-translational modification N-acetylalanine. Positions 2-150 are important for homodimerization and interaction with FBXO7; that stretch reads AGLEVLFASA…PIHEQWEKAN (149 aa). Residue Ser153 is modified to Phosphoserine. Arg205 bears the Omega-N-methylarginine mark. Arg219 bears the Asymmetric dimethylarginine mark. The disordered stretch occupies residues 222 to 271; sequence IDPSSGLPNRLPPGAVPPGARFDPFGPIGTSPPGPNPDHLPPPGYDDMYL. Position 231 is an omega-N-methylarginine (Arg231). Positions 251-265 are enriched in pro residues; the sequence is TSPPGPNPDHLPPPG. The residue at position 252 (Ser252) is a Phosphoserine.

Belongs to the proteasome inhibitor PI31 family. As to quaternary structure, monomer and homodimer. Interacts with FBXO7. Interacts with the 20S proteasome.

It is found in the cytoplasm. The protein localises to the endoplasmic reticulum. In terms of biological role, plays an important role in control of proteasome function. Inhibits the hydrolysis of protein and peptide substrates by the 20S proteasome. Also inhibits the activation of the proteasome by the proteasome regulatory proteins PA700 and PA28. This chain is Proteasome inhibitor PI31 subunit (PSMF1), found in Homo sapiens (Human).